Here is a 264-residue protein sequence, read N- to C-terminus: Thiazole synthase (264 aa).

The active-site Schiff-base intermediate with DXP is the lysine 106. Residues glycine 167, 193-194 (AG), and 215-216 (NT) contribute to the 1-deoxy-D-xylulose 5-phosphate site.

Belongs to the ThiG family. In terms of assembly, homotetramer. Forms heterodimers with either ThiH or ThiS.

The protein resides in the cytoplasm. The enzyme catalyses [ThiS sulfur-carrier protein]-C-terminal-Gly-aminoethanethioate + 2-iminoacetate + 1-deoxy-D-xylulose 5-phosphate = [ThiS sulfur-carrier protein]-C-terminal Gly-Gly + 2-[(2R,5Z)-2-carboxy-4-methylthiazol-5(2H)-ylidene]ethyl phosphate + 2 H2O + H(+). It participates in cofactor biosynthesis; thiamine diphosphate biosynthesis. Its function is as follows. Catalyzes the rearrangement of 1-deoxy-D-xylulose 5-phosphate (DXP) to produce the thiazole phosphate moiety of thiamine. Sulfur is provided by the thiocarboxylate moiety of the carrier protein ThiS. In vitro, sulfur can be provided by H(2)S. In Xanthomonas campestris pv. campestris (strain 8004), this protein is Thiazole synthase.